We begin with the raw amino-acid sequence, 87 residues long: Cytochrome c6 (87 aa).

Heme c is bound by residues Cys10, Cys13, His14, and Met56.

This sequence belongs to the cytochrome c family. PetJ subfamily. In terms of assembly, monomer. In terms of processing, binds 1 heme c group covalently per subunit.

Its subcellular location is the plastid. It localises to the chloroplast thylakoid lumen. Functionally, functions as an electron carrier between membrane-bound cytochrome b6-f and photosystem I in oxygenic photosynthesis. The sequence is that of Cytochrome c6 (petJ) from Euglena viridis (Cercaria viridis).